A 273-amino-acid chain; its full sequence is Phosphate import ATP-binding protein PstB 1 (273 aa).

The ABC transporter domain maps to 27–268 (ISIEHLSLYY…PLKKQTEDYI (242 aa)). 59 to 66 (GPSGCGKS) is an ATP binding site.

The protein belongs to the ABC transporter superfamily. Phosphate importer (TC 3.A.1.7) family. The complex is composed of two ATP-binding proteins (PstB), two transmembrane proteins (PstC and PstA) and a solute-binding protein (PstS).

The protein resides in the cell inner membrane. It catalyses the reaction phosphate(out) + ATP + H2O = ADP + 2 phosphate(in) + H(+). In terms of biological role, part of the ABC transporter complex PstSACB involved in phosphate import. Responsible for energy coupling to the transport system. The polypeptide is Phosphate import ATP-binding protein PstB 1 (Vibrio cholerae serotype O1 (strain ATCC 39315 / El Tor Inaba N16961)).